A 1142-amino-acid chain; its full sequence is Nucleoporin nup131 (1142 aa).

This sequence belongs to the nucleoporin Nup133 family. Component of the npc107-120 complex which consists of nup85, nup107, nup120, nup131, nup132 and seh1. Interacts with nup107.

It localises to the nucleus. Functions as a component of the nuclear pore complex (NPC). NPC components, collectively referred to as nucleoporins (NUPs), can play the role of both NPC structural components and of docking or interaction partners for transiently associated nuclear transport factors. Active directional transport is assured by both, a Phe-Gly (FG) repeat affinity gradient for these transport factors across the NPC and a transport cofactor concentration gradient across the nuclear envelope. This Schizosaccharomyces pombe (strain 972 / ATCC 24843) (Fission yeast) protein is Nucleoporin nup131 (nup131).